The chain runs to 420 residues: UDP-N-acetylglucosamine 1-carboxyvinyltransferase (420 aa).

Lys22–Asn23 contacts phosphoenolpyruvate. A UDP-N-acetyl-alpha-D-glucosamine-binding site is contributed by Arg93. Cys117 (proton donor) is an active-site residue. Cys117 is subject to 2-(S-cysteinyl)pyruvic acid O-phosphothioketal. UDP-N-acetyl-alpha-D-glucosamine contacts are provided by Asp307 and Ile329.

This sequence belongs to the EPSP synthase family. MurA subfamily.

Its subcellular location is the cytoplasm. It catalyses the reaction phosphoenolpyruvate + UDP-N-acetyl-alpha-D-glucosamine = UDP-N-acetyl-3-O-(1-carboxyvinyl)-alpha-D-glucosamine + phosphate. It participates in cell wall biogenesis; peptidoglycan biosynthesis. Its function is as follows. Cell wall formation. Adds enolpyruvyl to UDP-N-acetylglucosamine. The polypeptide is UDP-N-acetylglucosamine 1-carboxyvinyltransferase (Alteromonas mediterranea (strain DSM 17117 / CIP 110805 / LMG 28347 / Deep ecotype)).